Reading from the N-terminus, the 109-residue chain is Large ribosomal subunit protein uL22 (109 aa).

Belongs to the universal ribosomal protein uL22 family. As to quaternary structure, part of the 50S ribosomal subunit.

Its function is as follows. This protein binds specifically to 23S rRNA; its binding is stimulated by other ribosomal proteins, e.g. L4, L17, and L20. It is important during the early stages of 50S assembly. It makes multiple contacts with different domains of the 23S rRNA in the assembled 50S subunit and ribosome. In terms of biological role, the globular domain of the protein is located near the polypeptide exit tunnel on the outside of the subunit, while an extended beta-hairpin is found that lines the wall of the exit tunnel in the center of the 70S ribosome. The protein is Large ribosomal subunit protein uL22 of Ralstonia nicotianae (strain ATCC BAA-1114 / GMI1000) (Ralstonia solanacearum).